The following is a 243-amino-acid chain: Pleckstrin homology domain-containing family B member 1 (243 aa).

Positions 21–128 (ALVRGGWLWR…WKTALLEANS (108 aa)) constitute a PH domain.

As to quaternary structure, homodimer. Interacts (via PH domain) with MYO1C. Interacts (via PH domain) with MYO7A. Binds transducins. In terms of tissue distribution, highly expressed in retina and brain. Levels are very low or not detectable in all other tissues tested.

It is found in the membrane. The protein resides in the cytoplasm. The protein is Pleckstrin homology domain-containing family B member 1 (PLEKHB1) of Homo sapiens (Human).